Consider the following 147-residue polypeptide: uncharacterized protein (147 aa).

2 helical membrane passes run 21–41 (LMLWIAILIFVIAFAMIIVFV) and 67–87 (ALFGLVFSVLGYLITALSIPL).

It localises to the cell membrane. This is an uncharacterized protein from Ureaplasma parvum serovar 3 (strain ATCC 700970).